The following is a 629-amino-acid chain: tRNA uridine 5-carboxymethylaminomethyl modification enzyme MnmG (629 aa).

Residues 13–18 (GGGHAG), Val125, and Ser180 each bind FAD. 273–287 (GPRYCPSIEDKVMRF) is an NAD(+) binding site. Gln370 contacts FAD.

It belongs to the MnmG family. As to quaternary structure, homodimer. Heterotetramer of two MnmE and two MnmG subunits. Requires FAD as cofactor.

The protein resides in the cytoplasm. NAD-binding protein involved in the addition of a carboxymethylaminomethyl (cmnm) group at the wobble position (U34) of certain tRNAs, forming tRNA-cmnm(5)s(2)U34. This is tRNA uridine 5-carboxymethylaminomethyl modification enzyme MnmG from Salmonella agona (strain SL483).